A 132-amino-acid chain; its full sequence is Flagellar assembly factor FliW (132 aa).

It belongs to the FliW family. As to quaternary structure, interacts with translational regulator CsrA and flagellin(s).

It localises to the cytoplasm. Functionally, acts as an anti-CsrA protein, binds CsrA and prevents it from repressing translation of its target genes, one of which is flagellin. Binds to flagellin and participates in the assembly of the flagellum. The chain is Flagellar assembly factor FliW from Borreliella afzelii (strain PKo) (Borrelia afzelii).